Reading from the N-terminus, the 111-residue chain is Nucleoid-associated protein Teth514_0034 (111 aa).

This sequence belongs to the YbaB/EbfC family. Homodimer.

Its subcellular location is the cytoplasm. The protein localises to the nucleoid. Binds to DNA and alters its conformation. May be involved in regulation of gene expression, nucleoid organization and DNA protection. The protein is Nucleoid-associated protein Teth514_0034 of Thermoanaerobacter sp. (strain X514).